Here is a 458-residue protein sequence, read N- to C-terminus: Zinc finger protein 19 (458 aa).

Residues 14–85 (VTFEDVAVHF…EAQDDPPAER (72 aa)) form the KRAB domain. 9 C2H2-type zinc fingers span residues 161 to 183 (FICEECGKSFSYFSYYARHQRIH), 189 to 211 (FECSECGKAFNGNSSLIRHQRIH), 217 to 239 (YQCEECGRAFNDNANLIRHQRIH), 245 to 267 (YYCTECGNSFTSSSEFVIHQRIH), 273 to 295 (YECNECGKAFVGNSPLLRHQKIH), 301 to 323 (YECNECGKSFGRTSHLSQHQRIH), 329 to 351 (YSCKVCGQAFNFHTKLTRHQRIH), 357 to 379 (FDCVDCGKAFSAQEQLKRHLRIH), and 385 to 407 (YVCDECGKALTSKRNLHQHQRIH). The segment at 413-433 (YECSKYEKAFGTSSQLGHLEH) adopts a C2H2-type 10; atypical zinc-finger fold.

The protein belongs to the krueppel C2H2-type zinc-finger protein family.

It is found in the nucleus. May be involved in transcriptional regulation. The chain is Zinc finger protein 19 (ZNF19) from Homo sapiens (Human).